A 467-amino-acid chain; its full sequence is Regulator of nonsense transcripts 3B (467 aa).

2 disordered regions span residues 1 to 30 (MKEDKENTRPREKKVEIKCDENDKQEKPCK) and 197 to 467 (REEK…KAAE). Basic and acidic residues-rich tracts occupy residues 197 to 389 (REEK…EHTG) and 396 to 421 (RPEKSSRDSKKEESARKDRLRNKDRP). Positions 435 to 447 (RGGGGGGGTGGDG) are enriched in gly residues. The segment covering 449 to 467 (AAEKRAEREAKKNQEKAAE) has biased composition (basic and acidic residues).

Belongs to the RENT3 family.

It localises to the nucleus. The protein localises to the cytoplasm. Its function is as follows. Involved in nonsense-mediated decay (NMD) of mRNAs containing premature stop codons by associating with the nuclear exon junction complex (EJC) and serving as link between the EJC core and NMD machinery. Recruits UPF2 at the cytoplasmic side of the nuclear envelope and the subsequent formation of an UPF1-UPF2-UPF3 surveillance complex (including UPF1 bound to release factors at the stalled ribosome) is believed to activate NMD. In cooperation with UPF2 stimulates both ATPase and RNA helicase activities of UPF1. Binds spliced mRNA upstream of exon-exon junctions. The polypeptide is Regulator of nonsense transcripts 3B (Danio rerio (Zebrafish)).